We begin with the raw amino-acid sequence, 268 residues long: Tryptophan synthase alpha chain (268 aa).

Active-site proton acceptor residues include Glu49 and Asp60.

This sequence belongs to the TrpA family. Tetramer of two alpha and two beta chains.

It catalyses the reaction (1S,2R)-1-C-(indol-3-yl)glycerol 3-phosphate + L-serine = D-glyceraldehyde 3-phosphate + L-tryptophan + H2O. Its pathway is amino-acid biosynthesis; L-tryptophan biosynthesis; L-tryptophan from chorismate: step 5/5. In terms of biological role, the alpha subunit is responsible for the aldol cleavage of indoleglycerol phosphate to indole and glyceraldehyde 3-phosphate. The sequence is that of Tryptophan synthase alpha chain from Serratia proteamaculans (strain 568).